A 131-amino-acid chain; its full sequence is Large ribosomal subunit protein bL17 (131 aa).

It belongs to the bacterial ribosomal protein bL17 family. Part of the 50S ribosomal subunit. Contacts protein L32.

The sequence is that of Large ribosomal subunit protein bL17 from Finegoldia magna (strain ATCC 29328 / DSM 20472 / WAL 2508) (Peptostreptococcus magnus).